An 84-amino-acid chain; its full sequence is MKGFLLFISILMMIGTIVVGKEGYAMDHEGCKFSCFIRPAGFCDGYCKTHLKASSGYCAWPACYCYGVPDHIKVWDYATNKCGK.

Positions 1–20 are cleaved as a signal peptide; sequence MKGFLLFISILMMIGTIVVG. Residues 21–83 form the LCN-type CS-alpha/beta domain; it reads KEGYAMDHEG…VWDYATNKCG (63 aa). Disulfide bonds link Cys-31–Cys-82, Cys-35–Cys-58, Cys-43–Cys-63, and Cys-47–Cys-65. Cys-82 bears the Cysteine amide mark.

It belongs to the long (4 C-C) scorpion toxin superfamily. Sodium channel inhibitor family. Beta subfamily. As to expression, expressed by the venom gland.

The protein localises to the secreted. Functionally, alpha toxins bind voltage-independently at site-3 of sodium channels (Nav) and inhibit the inactivation of the activated channels, thereby blocking neuronal transmission. This toxin acts on Nav1.2/SCN2A, Nav1.3/SCN3A, Nav1.5/SCN5A, Nav1.6/SCN8A and Nav1.7/SCN9A voltage-gated sodium channels, with the highest affinity for Nav1.3/SCN3A, followed by Nav1.6/SCN8A and Nav1.7/SCN9A which are affected almost equally. Interestingly, shows a significant shift of the voltage dependence of activation for Nav1.3/SCN3A that is characteristic of beta-toxins. In addition, in presence of LPS, this toxin inhibits the release of NO, IL-6 and TNF-alpha in J774.1 cells. Further, in the absence of LPS, it stimulates the production of the anti-inflammatory cytokine IL-10. This toxin is active on mammals. The polypeptide is Alpha-mammal toxin Ts2 (Tityus serrulatus (Brazilian scorpion)).